Consider the following 229-residue polypeptide: UPF0500 protein C1orf216 (229 aa).

The tract at residues 1–144 is disordered; it reads MFAIQPGLAE…RGPGPPDPLL (144 aa). The span at 62–71 shows a compositional bias: polar residues; that stretch reads SESPSDNQAF. 2 stretches are compositionally biased toward low complexity: residues 84–93 and 115–126; these read PPEGAEIPGA and SSSLSIDSRSSS.

The protein belongs to the UPF0500 family.

The polypeptide is UPF0500 protein C1orf216 (C1orf216) (Homo sapiens (Human)).